The chain runs to 248 residues: 1-(5-phosphoribosyl)-5-[(5-phosphoribosylamino)methylideneamino] imidazole-4-carboxamide isomerase (248 aa).

Catalysis depends on D8, which acts as the Proton acceptor. D130 acts as the Proton donor in catalysis.

The protein belongs to the HisA/HisF family.

The protein localises to the cytoplasm. The catalysed reaction is 1-(5-phospho-beta-D-ribosyl)-5-[(5-phospho-beta-D-ribosylamino)methylideneamino]imidazole-4-carboxamide = 5-[(5-phospho-1-deoxy-D-ribulos-1-ylimino)methylamino]-1-(5-phospho-beta-D-ribosyl)imidazole-4-carboxamide. Its pathway is amino-acid biosynthesis; L-histidine biosynthesis; L-histidine from 5-phospho-alpha-D-ribose 1-diphosphate: step 4/9. This chain is 1-(5-phosphoribosyl)-5-[(5-phosphoribosylamino)methylideneamino] imidazole-4-carboxamide isomerase, found in Alkalilimnicola ehrlichii (strain ATCC BAA-1101 / DSM 17681 / MLHE-1).